The chain runs to 479 residues: UDP-N-acetylmuramoyl-L-alanyl-D-glutamate--2,6-diaminopimelate ligase (479 aa).

UDP-N-acetyl-alpha-D-muramoyl-L-alanyl-D-glutamate is bound at residue Ser-21. 98-104 is a binding site for ATP; sequence GTNGKSS. UDP-N-acetyl-alpha-D-muramoyl-L-alanyl-D-glutamate-binding positions include 144-145, Ser-171, Gln-177, and Arg-179; that span reads TT. Position 211 is an N6-carboxylysine (Lys-211). Meso-2,6-diaminopimelate-binding positions include Arg-372, 396–399, Gly-446, and Glu-450; that span reads DNPR. The Meso-diaminopimelate recognition motif signature appears at 396 to 399; the sequence is DNPR.

This sequence belongs to the MurCDEF family. MurE subfamily. The cofactor is Mg(2+). Carboxylation is probably crucial for Mg(2+) binding and, consequently, for the gamma-phosphate positioning of ATP.

It localises to the cytoplasm. It carries out the reaction UDP-N-acetyl-alpha-D-muramoyl-L-alanyl-D-glutamate + meso-2,6-diaminopimelate + ATP = UDP-N-acetyl-alpha-D-muramoyl-L-alanyl-gamma-D-glutamyl-meso-2,6-diaminopimelate + ADP + phosphate + H(+). It participates in cell wall biogenesis; peptidoglycan biosynthesis. In terms of biological role, catalyzes the addition of meso-diaminopimelic acid to the nucleotide precursor UDP-N-acetylmuramoyl-L-alanyl-D-glutamate (UMAG) in the biosynthesis of bacterial cell-wall peptidoglycan. The protein is UDP-N-acetylmuramoyl-L-alanyl-D-glutamate--2,6-diaminopimelate ligase of Rickettsia conorii (strain ATCC VR-613 / Malish 7).